The chain runs to 156 residues: Large ribosomal subunit protein uL15 (156 aa).

Residues 1–16 (MVRRFKRGTKYRRGSR) are compositionally biased toward basic residues. The segment at 1–37 (MVRRFKRGTKYRRGSRTHGWGRVGQHRKSGGSGGKGM) is disordered.

The protein belongs to the universal ribosomal protein uL15 family. In terms of assembly, part of the 50S ribosomal subunit.

In terms of biological role, binds to the 23S rRNA. The sequence is that of Large ribosomal subunit protein uL15 from Pyrobaculum aerophilum (strain ATCC 51768 / DSM 7523 / JCM 9630 / CIP 104966 / NBRC 100827 / IM2).